We begin with the raw amino-acid sequence, 348 residues long: Beta-hexosaminidase (348 aa).

Substrate is bound by residues aspartate 64, arginine 72, arginine 138, and 168 to 169 (KH). Histidine 181 (proton donor/acceptor) is an active-site residue. The active-site Nucleophile is the aspartate 252.

The protein belongs to the glycosyl hydrolase 3 family. NagZ subfamily.

It localises to the cytoplasm. The catalysed reaction is Hydrolysis of terminal non-reducing N-acetyl-D-hexosamine residues in N-acetyl-beta-D-hexosaminides.. The protein operates within cell wall biogenesis; peptidoglycan recycling. Plays a role in peptidoglycan recycling by cleaving the terminal beta-1,4-linked N-acetylglucosamine (GlcNAc) from peptide-linked peptidoglycan fragments, giving rise to free GlcNAc, anhydro-N-acetylmuramic acid and anhydro-N-acetylmuramic acid-linked peptides. The polypeptide is Beta-hexosaminidase (Alkalilimnicola ehrlichii (strain ATCC BAA-1101 / DSM 17681 / MLHE-1)).